A 192-amino-acid polypeptide reads, in one-letter code: Elongation factor P (192 aa).

It belongs to the elongation factor P family.

The protein localises to the cytoplasm. It functions in the pathway protein biosynthesis; polypeptide chain elongation. Functionally, involved in peptide bond synthesis. Stimulates efficient translation and peptide-bond synthesis on native or reconstituted 70S ribosomes in vitro. Probably functions indirectly by altering the affinity of the ribosome for aminoacyl-tRNA, thus increasing their reactivity as acceptors for peptidyl transferase. The chain is Elongation factor P from Borrelia duttonii (strain Ly).